A 270-amino-acid chain; its full sequence is Tetraspanin-14 (270 aa).

The Cytoplasmic segment spans residues 1–17 (MHYYRYSNAEVSCWYKY). A helical membrane pass occupies residues 18-38 (LLFSYNIVFWLAGVVFLGVGL). Residues 39–61 (WAWSEKGVLSDLTKVTRLHGIDP) are Extracellular-facing. The helical transmembrane segment at 62–82 (VVLVLMVGVVMFTLGFAGCVG) threads the bilayer. Topologically, residues 83-92 (ALRENICLLK) are cytoplasmic. A helical membrane pass occupies residues 93–113 (FFCGAIVLIFFLELAVAVLAF). Residues 114–232 (LFQDWVRDRF…QALEGWLPRN (119 aa)) are Extracellular-facing. The tract at residues 114–232 (LFQDWVRDRF…QALEGWLPRN (119 aa)) is necessary and sufficient for interaction with ADAM10. 4 disulfide bridges follow: cysteine 153–cysteine 221, cysteine 154–cysteine 186, cysteine 170–cysteine 180, and cysteine 187–cysteine 200. Asparagine 169 carries N-linked (GlcNAc...) asparagine glycosylation. The chain crosses the membrane as a helical span at residues 233–253 (IYIVAGVFIAISLLQIFGIFL). The Cytoplasmic segment spans residues 254–270 (ARTLISDIEAVKAGHHF).

Belongs to the tetraspanin (TM4SF) family. As to quaternary structure, interacts with ADAM10; the interaction promotes ADAM10 maturation and cell surface expression.

It localises to the cell membrane. In terms of biological role, part of TspanC8 subgroup, composed of 6 members that interact with the transmembrane metalloprotease ADAM10. This interaction is required for ADAM10 exit from the endoplasmic reticulum and for enzymatic maturation and trafficking to the cell surface as well as substrate specificity. Different TspanC8/ADAM10 complexes have distinct substrates. Negatively regulates ADAM10-mediated cleavage of GP6. Promotes ADAM10-mediated cleavage of CDH5. The polypeptide is Tetraspanin-14 (Tspan14) (Mus musculus (Mouse)).